Reading from the N-terminus, the 340-residue chain is N-acetyl-gamma-glutamyl-phosphate reductase (340 aa).

The active site involves Cys146.

Belongs to the NAGSA dehydrogenase family. Type 1 subfamily.

It is found in the cytoplasm. It carries out the reaction N-acetyl-L-glutamate 5-semialdehyde + phosphate + NADP(+) = N-acetyl-L-glutamyl 5-phosphate + NADPH + H(+). It participates in amino-acid biosynthesis; L-arginine biosynthesis; N(2)-acetyl-L-ornithine from L-glutamate: step 3/4. In terms of biological role, catalyzes the NADPH-dependent reduction of N-acetyl-5-glutamyl phosphate to yield N-acetyl-L-glutamate 5-semialdehyde. This chain is N-acetyl-gamma-glutamyl-phosphate reductase, found in Streptococcus mutans serotype c (strain ATCC 700610 / UA159).